The following is a 278-amino-acid chain: Shikimate dehydrogenase (NADP(+)) (278 aa).

Shikimate-binding positions include Ser-23–Ser-25 and Thr-70. Residue Lys-74 is the Proton acceptor of the active site. Glu-86 lines the NADP(+) pocket. Residues Asn-95 and Asp-110 each coordinate shikimate. NADP(+) is bound by residues Gly-135–Ala-139, Asn-159–Lys-164, and Met-224. Tyr-226 is a shikimate binding site. Position 248 (Gly-248) interacts with NADP(+).

It belongs to the shikimate dehydrogenase family. In terms of assembly, homodimer.

It catalyses the reaction shikimate + NADP(+) = 3-dehydroshikimate + NADPH + H(+). It functions in the pathway metabolic intermediate biosynthesis; chorismate biosynthesis; chorismate from D-erythrose 4-phosphate and phosphoenolpyruvate: step 4/7. Involved in the biosynthesis of the chorismate, which leads to the biosynthesis of aromatic amino acids. Catalyzes the reversible NADPH linked reduction of 3-dehydroshikimate (DHSA) to yield shikimate (SA). This is Shikimate dehydrogenase (NADP(+)) from Alcanivorax borkumensis (strain ATCC 700651 / DSM 11573 / NCIMB 13689 / SK2).